The chain runs to 61 residues: Small ribosomal subunit protein uS14 (61 aa).

Cys24, Cys27, Cys40, and Cys43 together coordinate Zn(2+).

This sequence belongs to the universal ribosomal protein uS14 family. Zinc-binding uS14 subfamily. Part of the 30S ribosomal subunit. Contacts proteins S3 and S10. Zn(2+) serves as cofactor.

Its function is as follows. Binds 16S rRNA, required for the assembly of 30S particles and may also be responsible for determining the conformation of the 16S rRNA at the A site. This chain is Small ribosomal subunit protein uS14, found in Campylobacter concisus (strain 13826).